We begin with the raw amino-acid sequence, 220 residues long: Adenylate kinase (220 aa).

10-15 contacts ATP; that stretch reads GAGKGT. The interval 30–59 is NMP; that stretch reads STGDMLRAAVKAGSPLGVEAKGYMDAGKLV. Residues Thr-31, Arg-36, 57–59, 85–88, and Gln-92 contribute to the AMP site; these read KLV and GFPR. The disordered stretch occupies residues 122 to 150; the sequence is GRRTHPASGRTYHVKFNPPKVEGKDDVTG. Residues 122–159 form an LID region; the sequence is GRRTHPASGRTYHVKFNPPKVEGKDDVTGEPLIQRDDD. ATP-binding positions include Arg-123 and 132 to 133; that span reads TY. Residues Arg-156 and Arg-167 each coordinate AMP. Gly-206 serves as a coordination point for ATP.

It belongs to the adenylate kinase family. As to quaternary structure, monomer.

Its subcellular location is the cytoplasm. The enzyme catalyses AMP + ATP = 2 ADP. It participates in purine metabolism; AMP biosynthesis via salvage pathway; AMP from ADP: step 1/1. Its function is as follows. Catalyzes the reversible transfer of the terminal phosphate group between ATP and AMP. Plays an important role in cellular energy homeostasis and in adenine nucleotide metabolism. The chain is Adenylate kinase from Burkholderia ambifaria (strain MC40-6).